Reading from the N-terminus, the 245-residue chain is MLIFPAIDLKGGRCVRLYQGRMEDAIVYNDDPVSQALAWQAKGAQMIHLVDLDGAFEGEPKNLPVIQAILEAVTVAVQLGGGIRDLNIIDRYLRMGVSRVIIGTAAIKNPELLSVACKEYGQRIVLGLDARDGKVATDGWAGTSQVTALELALEMKGRGLRRVVYTDISKDGTLAGPNLAATAELARATGLKVIASGGFATIDDVKAAAALEGDGIEGAILGKSIYTGAIDVAEAIRVAREGRPC.

D8 (proton acceptor) is an active-site residue. The Proton donor role is filled by D129.

This sequence belongs to the HisA/HisF family.

Its subcellular location is the cytoplasm. The catalysed reaction is 1-(5-phospho-beta-D-ribosyl)-5-[(5-phospho-beta-D-ribosylamino)methylideneamino]imidazole-4-carboxamide = 5-[(5-phospho-1-deoxy-D-ribulos-1-ylimino)methylamino]-1-(5-phospho-beta-D-ribosyl)imidazole-4-carboxamide. Its pathway is amino-acid biosynthesis; L-histidine biosynthesis; L-histidine from 5-phospho-alpha-D-ribose 1-diphosphate: step 4/9. The sequence is that of 1-(5-phosphoribosyl)-5-[(5-phosphoribosylamino)methylideneamino] imidazole-4-carboxamide isomerase from Heliobacterium modesticaldum (strain ATCC 51547 / Ice1).